Reading from the N-terminus, the 312-residue chain is Glyoxylate/hydroxypyruvate reductase A (312 aa).

The active site involves R227. H275 acts as the Proton donor in catalysis.

This sequence belongs to the D-isomer specific 2-hydroxyacid dehydrogenase family. GhrA subfamily.

Its subcellular location is the cytoplasm. The catalysed reaction is glycolate + NADP(+) = glyoxylate + NADPH + H(+). The enzyme catalyses (R)-glycerate + NAD(+) = 3-hydroxypyruvate + NADH + H(+). It carries out the reaction (R)-glycerate + NADP(+) = 3-hydroxypyruvate + NADPH + H(+). In terms of biological role, catalyzes the NADPH-dependent reduction of glyoxylate and hydroxypyruvate into glycolate and glycerate, respectively. This is Glyoxylate/hydroxypyruvate reductase A from Salmonella paratyphi C (strain RKS4594).